The primary structure comprises 204 residues: Leucyl/phenylalanyl-tRNA--protein transferase (204 aa).

Belongs to the L/F-transferase family.

It localises to the cytoplasm. The enzyme catalyses N-terminal L-lysyl-[protein] + L-leucyl-tRNA(Leu) = N-terminal L-leucyl-L-lysyl-[protein] + tRNA(Leu) + H(+). It catalyses the reaction N-terminal L-arginyl-[protein] + L-leucyl-tRNA(Leu) = N-terminal L-leucyl-L-arginyl-[protein] + tRNA(Leu) + H(+). The catalysed reaction is L-phenylalanyl-tRNA(Phe) + an N-terminal L-alpha-aminoacyl-[protein] = an N-terminal L-phenylalanyl-L-alpha-aminoacyl-[protein] + tRNA(Phe). Functions in the N-end rule pathway of protein degradation where it conjugates Leu, Phe and, less efficiently, Met from aminoacyl-tRNAs to the N-termini of proteins containing an N-terminal arginine or lysine. This chain is Leucyl/phenylalanyl-tRNA--protein transferase, found in Rhizobium meliloti (strain 1021) (Ensifer meliloti).